The chain runs to 284 residues: ATP phosphoribosyltransferase (284 aa).

Belongs to the ATP phosphoribosyltransferase family. Long subfamily. Equilibrium between an active dimeric form, an inactive hexameric form and higher aggregates. Interconversion between the various forms is largely reversible and is influenced by the natural substrates and inhibitors of the enzyme. Requires Mg(2+) as cofactor.

It is found in the cytoplasm. The catalysed reaction is 1-(5-phospho-beta-D-ribosyl)-ATP + diphosphate = 5-phospho-alpha-D-ribose 1-diphosphate + ATP. It participates in amino-acid biosynthesis; L-histidine biosynthesis; L-histidine from 5-phospho-alpha-D-ribose 1-diphosphate: step 1/9. With respect to regulation, feedback inhibited by histidine. Functionally, catalyzes the condensation of ATP and 5-phosphoribose 1-diphosphate to form N'-(5'-phosphoribosyl)-ATP (PR-ATP). Has a crucial role in the pathway because the rate of histidine biosynthesis seems to be controlled primarily by regulation of HisG enzymatic activity. The protein is ATP phosphoribosyltransferase (hisG) of Mycobacterium bovis (strain ATCC BAA-935 / AF2122/97).